Here is a 275-residue protein sequence, read N- to C-terminus: Glutamate racemase (275 aa).

Substrate is bound by residues 22-23 (DS) and 54-55 (YG). C85 serves as the catalytic Proton donor/acceptor. 86 to 87 (NT) lines the substrate pocket. The active-site Proton donor/acceptor is the C196. Residue 197 to 198 (TH) coordinates substrate.

This sequence belongs to the aspartate/glutamate racemases family.

The catalysed reaction is L-glutamate = D-glutamate. Its pathway is cell wall biogenesis; peptidoglycan biosynthesis. Its function is as follows. Provides the (R)-glutamate required for cell wall biosynthesis. The protein is Glutamate racemase of Pseudomonas syringae pv. tomato (strain ATCC BAA-871 / DC3000).